We begin with the raw amino-acid sequence, 1430 residues long: Gag-Pol polyprotein (1430 aa).

G2 carries N-myristoyl glycine; by host lipidation. The interval 7-31 (VLSGGKLDAWEKIRLKPGGKKRYRL) is interaction with Gp41. The interval 8–43 (LSGGKLDAWEKIRLKPGGKKRYRLKHLVWASRELER) is interaction with host CALM1. An interaction with host AP3D1 region spans residues 12 to 19 (KLDAWEKI). The tract at residues 14 to 33 (DAWEKIRLKPGGKKRYRLKH) is interaction with membrane phosphatidylinositol 4,5-bisphosphate and RNA. Residues 16–22 (WEKIRLK) carry the Nuclear export signal motif. The Nuclear localization signal motif lies at 26–32 (KKRYRLK). Positions 73-77 (EELKS) are interaction with membrane phosphatidylinositol 4,5-bisphosphate. The disordered stretch occupies residues 105-124 (QEEQDKSQQKEQQKAADKEV). At Y128 the chain carries Phosphotyrosine; by host. Positions 185–223 (NTVGGHQAAMQMLKDTINEEAAEWDRLHPVHAGPIPPGQ) are interaction with human PPIA/CYPA and NUP153. The interval 273-359 (YSPVSILDIK…GGPGHKARIL (87 aa)) is dimerization/Multimerization of capsid protein p24. 2 consecutive CCHC-type zinc fingers follow at residues 385–402 (VKCFNCGKEGHIARNCRA) and 406–423 (KGCWKCGKEGHQMKDCTE). The segment at 440 to 479 (ARKFSSEQTRANSPASRELRVRRGDNPLPEAGAERRGTGS) is disordered. The segment covering 445–454 (SEQTRANSPA) has biased composition (polar residues). The segment at 484-488 (PQITL) is dimerization of protease. In terms of domain architecture, Peptidase A2 spans 503 to 572 (REALLDTGAD…TPVNIIGRNL (70 aa)). The For protease activity; shared with dimeric partner role is filled by D508. 2 dimerization of protease regions span residues 532 to 538 (GIGGFIK) and 571 to 583 (NLLTQLGCTLNFP). The region spanning 626–816 (EGKISKIGPE…PPFLWMGYEL (191 aa)) is the Reverse transcriptase domain. 3 residues coordinate Mg(2+): D692, D767, and D768. An RT 'primer grip' region spans residues 809–817 (FLWMGYELH). The Tryptophan repeat motif signature appears at 980-996 (WEIWWTEYWQATWIPEW). Residues 1016-1139 (IAGAETFYVD…VDKLVSSGIR (124 aa)) form the RNase H type-1 domain. Mg(2+) contacts are provided by D1025, E1060, D1080, and D1131. The Integrase-type zinc-finger motif lies at 1145–1186 (DGIDKAQEEHEKYHNNWRAMASDFNLPPVVAKEIVANCDKCQ). Residues H1154, H1158, C1182, and C1185 each contribute to the Zn(2+) site. Residues 1196–1346 (VDCSPGIWQL…SAGERIIDII (151 aa)) enclose the Integrase catalytic domain. Mg(2+) contacts are provided by D1206, D1258, and E1294. Positions 1365-1412 (FRVYFRDSRDPVWKGPAKLLWKGEGAVVIQDNNEIKVVPRRKAKIIRD) form a DNA-binding region, integrase-type.

Homotrimer; further assembles as hexamers of trimers. Interacts with gp41 (via C-terminus). Interacts with host CALM1; this interaction induces a conformational change in the Matrix protein, triggering exposure of the myristate group. Interacts with host AP3D1; this interaction allows the polyprotein trafficking to multivesicular bodies during virus assembly. Part of the pre-integration complex (PIC) which is composed of viral genome, matrix protein, Vpr and integrase. As to quaternary structure, homodimer; the homodimer further multimerizes as homohexamers or homopentamers. Interacts with human PPIA/CYPA; This interaction stabilizes the capsid. Interacts with human NUP153. Interacts with host PDZD8; this interaction stabilizes the capsid. Interacts with monkey TRIM5; this interaction destabilizes the capsid. In terms of assembly, homodimer, whose active site consists of two apposed aspartic acid residues. Heterodimer of p66 RT and p51 RT (RT p66/p51). Heterodimerization of RT is essential for DNA polymerase activity. The overall folding of the subdomains is similar in p66 RT and p51 RT but the spatial arrangements of the subdomains are dramatically different. As to quaternary structure, homotetramer; may further associate as a homohexadecamer. Part of the pre-integration complex (PIC) which is composed of viral genome, matrix protein, Vpr and integrase. Interacts with human SMARCB1/INI1 and human PSIP1/LEDGF isoform 1. Interacts with human KPNA3; this interaction might play a role in nuclear import of the pre-integration complex. Interacts with human NUP153; this interaction might play a role in nuclear import of the pre-integration complex. Requires Mg(2+) as cofactor. In terms of processing, specific enzymatic cleavages by the viral protease yield mature proteins. The protease is released by autocatalytic cleavage. The polyprotein is cleaved during and after budding, this process is termed maturation. Proteolytic cleavage of p66 RT removes the RNase H domain to yield the p51 RT subunit. Nucleocapsid protein p7 might be further cleaved after virus entry. Tyrosine phosphorylated presumably in the virion by a host kinase. Phosphorylation is apparently not a major regulator of membrane association. Post-translationally, phosphorylated possibly by host MAPK1; this phosphorylation is necessary for Pin1-mediated virion uncoating. In terms of processing, methylated by host PRMT6, impairing its function by reducing RNA annealing and the initiation of reverse transcription.

The protein localises to the host cell membrane. The protein resides in the host endosome. It is found in the host multivesicular body. It localises to the virion membrane. Its subcellular location is the host nucleus. The protein localises to the host cytoplasm. The protein resides in the virion. It carries out the reaction Specific for a P1 residue that is hydrophobic, and P1' variable, but often Pro.. The catalysed reaction is Endohydrolysis of RNA in RNA/DNA hybrids. Three different cleavage modes: 1. sequence-specific internal cleavage of RNA. Human immunodeficiency virus type 1 and Moloney murine leukemia virus enzymes prefer to cleave the RNA strand one nucleotide away from the RNA-DNA junction. 2. RNA 5'-end directed cleavage 13-19 nucleotides from the RNA end. 3. DNA 3'-end directed cleavage 15-20 nucleotides away from the primer terminus.. It catalyses the reaction 3'-end directed exonucleolytic cleavage of viral RNA-DNA hybrid.. The enzyme catalyses DNA(n) + a 2'-deoxyribonucleoside 5'-triphosphate = DNA(n+1) + diphosphate. Protease: The viral protease is inhibited by many synthetic protease inhibitors (PIs), such as amprenavir, atazanavir, indinavir, loprinavir, nelfinavir, ritonavir and saquinavir. Use of protease inhibitors in tritherapy regimens permit more ambitious therapeutic strategies. Reverse transcriptase/ribonuclease H: RT can be inhibited either by nucleoside RT inhibitors (NRTIs) or by non nucleoside RT inhibitors (NNRTIs). NRTIs act as chain terminators, whereas NNRTIs inhibit DNA polymerization by binding a small hydrophobic pocket near the RT active site and inducing an allosteric change in this region. Classical NRTIs are abacavir, adefovir (PMEA), didanosine (ddI), lamivudine (3TC), stavudine (d4T), tenofovir (PMPA), zalcitabine (ddC), and zidovudine (AZT). Classical NNRTIs are atevirdine (BHAP U-87201E), delavirdine, efavirenz (DMP-266), emivirine (I-EBU), and nevirapine (BI-RG-587). The tritherapies used as a basic effective treatment of AIDS associate two NRTIs and one NNRTI. In terms of biological role, mediates, with Gag polyprotein, the essential events in virion assembly, including binding the plasma membrane, making the protein-protein interactions necessary to create spherical particles, recruiting the viral Env proteins, and packaging the genomic RNA via direct interactions with the RNA packaging sequence (Psi). Gag-Pol polyprotein may regulate its own translation, by the binding genomic RNA in the 5'-UTR. At low concentration, the polyprotein would promote translation, whereas at high concentration, the polyprotein would encapsidate genomic RNA and then shut off translation. Functionally, targets the polyprotein to the plasma membrane via a multipartite membrane-binding signal, that includes its myristoylated N-terminus. Matrix protein is part of the pre-integration complex. Implicated in the release from host cell mediated by Vpu. Binds to RNA. Its function is as follows. Forms the conical core that encapsulates the genomic RNA-nucleocapsid complex in the virion. Most core are conical, with only 7% tubular. The core is constituted by capsid protein hexamer subunits. The core is disassembled soon after virion entry. Host restriction factors such as TRIM5-alpha or TRIMCyp bind retroviral capsids and cause premature capsid disassembly, leading to blocks in reverse transcription. Capsid restriction by TRIM5 is one of the factors which restricts HIV-1 to the human species. Host PIN1 apparently facilitates the virion uncoating. On the other hand, interactions with PDZD8 or CYPA stabilize the capsid. Encapsulates and protects viral dimeric unspliced genomic RNA (gRNA). Binds these RNAs through its zinc fingers. Acts as a nucleic acid chaperone which is involved in rearangement of nucleic acid secondary structure during gRNA retrotranscription. Also facilitates template switch leading to recombination. As part of the polyprotein, participates in gRNA dimerization, packaging, tRNA incorporation and virion assembly. In terms of biological role, aspartyl protease that mediates proteolytic cleavages of Gag and Gag-Pol polyproteins during or shortly after the release of the virion from the plasma membrane. Cleavages take place as an ordered, step-wise cascade to yield mature proteins. This process is called maturation. Displays maximal activity during the budding process just prior to particle release from the cell. Also cleaves Nef and Vif, probably concomitantly with viral structural proteins on maturation of virus particles. Hydrolyzes host EIF4GI and PABP1 in order to shut off the capped cellular mRNA translation. The resulting inhibition of cellular protein synthesis serves to ensure maximal viral gene expression and to evade host immune response. Also mediates cleavage of host YTHDF3. Mediates cleavage of host CARD8, thereby activating the CARD8 inflammasome, leading to the clearance of latent HIV-1 in patient CD4(+) T-cells after viral reactivation; in contrast, HIV-1 can evade CARD8-sensing when its protease remains inactive in infected cells prior to viral budding. Functionally, multifunctional enzyme that converts the viral RNA genome into dsDNA in the cytoplasm, shortly after virus entry into the cell. This enzyme displays a DNA polymerase activity that can copy either DNA or RNA templates, and a ribonuclease H (RNase H) activity that cleaves the RNA strand of RNA-DNA heteroduplexes in a partially processive 3' to 5' endonucleasic mode. Conversion of viral genomic RNA into dsDNA requires many steps. A tRNA(3)-Lys binds to the primer-binding site (PBS) situated at the 5'-end of the viral RNA. RT uses the 3' end of the tRNA primer to perform a short round of RNA-dependent minus-strand DNA synthesis. The reading proceeds through the U5 region and ends after the repeated (R) region which is present at both ends of viral RNA. The portion of the RNA-DNA heteroduplex is digested by the RNase H, resulting in a ssDNA product attached to the tRNA primer. This ssDNA/tRNA hybridizes with the identical R region situated at the 3' end of viral RNA. This template exchange, known as minus-strand DNA strong stop transfer, can be either intra- or intermolecular. RT uses the 3' end of this newly synthesized short ssDNA to perform the RNA-dependent minus-strand DNA synthesis of the whole template. RNase H digests the RNA template except for two polypurine tracts (PPTs) situated at the 5'-end and near the center of the genome. It is not clear if both polymerase and RNase H activities are simultaneous. RNase H probably can proceed both in a polymerase-dependent (RNA cut into small fragments by the same RT performing DNA synthesis) and a polymerase-independent mode (cleavage of remaining RNA fragments by free RTs). Secondly, RT performs DNA-directed plus-strand DNA synthesis using the PPTs that have not been removed by RNase H as primers. PPTs and tRNA primers are then removed by RNase H. The 3' and 5' ssDNA PBS regions hybridize to form a circular dsDNA intermediate. Strand displacement synthesis by RT to the PBS and PPT ends produces a blunt ended, linear dsDNA copy of the viral genome that includes long terminal repeats (LTRs) at both ends. Its function is as follows. Catalyzes viral DNA integration into the host chromosome, by performing a series of DNA cutting and joining reactions. This enzyme activity takes place after virion entry into a cell and reverse transcription of the RNA genome in dsDNA. The first step in the integration process is 3' processing. This step requires a complex comprising the viral genome, matrix protein, Vpr and integrase. This complex is called the pre-integration complex (PIC). The integrase protein removes 2 nucleotides from each 3' end of the viral DNA, leaving recessed CA OH's at the 3' ends. In the second step, the PIC enters cell nucleus. This process is mediated through integrase and Vpr proteins, and allows the virus to infect a non dividing cell. This ability to enter the nucleus is specific of lentiviruses, other retroviruses cannot and rely on cell division to access cell chromosomes. In the third step, termed strand transfer, the integrase protein joins the previously processed 3' ends to the 5' ends of strands of target cellular DNA at the site of integration. The 5'-ends are produced by integrase-catalyzed staggered cuts, 5 bp apart. A Y-shaped, gapped, recombination intermediate results, with the 5'-ends of the viral DNA strands and the 3' ends of target DNA strands remaining unjoined, flanking a gap of 5 bp. The last step is viral DNA integration into host chromosome. This involves host DNA repair synthesis in which the 5 bp gaps between the unjoined strands are filled in and then ligated. Since this process occurs at both cuts flanking the HIV genome, a 5 bp duplication of host DNA is produced at the ends of HIV-1 integration. Alternatively, Integrase may catalyze the excision of viral DNA just after strand transfer, this is termed disintegration. The protein is Gag-Pol polyprotein (gag-pol) of Human immunodeficiency virus type 1 group M subtype F2 (isolate MP255) (HIV-1).